The primary structure comprises 205 residues: MIVQRLLNQLIAQDIRDFRVLAAIAKVPRQLFVDEAMAHKAWDNTALPIGHGQTISQPYMVARMTELLIQNDPAHVLEIGTGSGYQTAVLAHLVEHVYTVERIKSLQFQARRRLRQLDLHNVSAKHGNGWLGWPNKGPFDAILVTAAASEVPTALTDQLADGGRLVLPVGDSQQTLQLIERSGSQLTSRILEPVRFVPLIDGDVE.

Residue Ser56 is part of the active site.

Belongs to the methyltransferase superfamily. L-isoaspartyl/D-aspartyl protein methyltransferase family.

The protein localises to the cytoplasm. It catalyses the reaction [protein]-L-isoaspartate + S-adenosyl-L-methionine = [protein]-L-isoaspartate alpha-methyl ester + S-adenosyl-L-homocysteine. Its function is as follows. Catalyzes the methyl esterification of L-isoaspartyl residues in peptides and proteins that result from spontaneous decomposition of normal L-aspartyl and L-asparaginyl residues. It plays a role in the repair and/or degradation of damaged proteins. The protein is Protein-L-isoaspartate O-methyltransferase of Aeromonas hydrophila subsp. hydrophila (strain ATCC 7966 / DSM 30187 / BCRC 13018 / CCUG 14551 / JCM 1027 / KCTC 2358 / NCIMB 9240 / NCTC 8049).